A 334-amino-acid chain; its full sequence is MKTLGEFIIEKQAEYPEAKGELSGILSSIRLAAKIIHREINRAGLSQDILGVAGSENIQGEAQMKLDVFANETMKKALLAREEVAGFASEEDDNFVAFENDRAKNAKYILMTDPLDGSSNIDVNVSVGTIFSIYKRVSPIGSPVTMEDFLQEGRKQVASGYVTYGSSTMLVYTTGNGVNGFTYDPSLGLFILSHPDMKMPTEGKYYSINEGQYVTFPMGVKKFIKYCQESDEATKRPYSSRYIGSLVSDFHRNLLKGGIYIYPTSTVYPKGKLRLLYEGNPMAFLAEQAGGMATDGFNPILDIKPSELHQRVPFFVGSTSMVKQADKFMQECAE.

Positions 90, 113, 115, and 116 each coordinate Mg(2+). Residues 116–119, Asn-209, Tyr-242, and Lys-272 contribute to the substrate site; that span reads DGSS. Glu-278 contacts Mg(2+).

The protein belongs to the FBPase class 1 family. In terms of assembly, homotetramer. The cofactor is Mg(2+).

It is found in the cytoplasm. The catalysed reaction is beta-D-fructose 1,6-bisphosphate + H2O = beta-D-fructose 6-phosphate + phosphate. It participates in carbohydrate biosynthesis; gluconeogenesis. The protein is Fructose-1,6-bisphosphatase class 1 of Actinobacillus pleuropneumoniae serotype 7 (strain AP76).